A 75-amino-acid chain; its full sequence is MSKLGALLTICLLLFPITALLMDGDQPADRPAERMDYDISSEVHRLLERRHPPCCMYGRCRRYPGCSSASCCQGG.

The signal sequence occupies residues 1–19 (MSKLGALLTICLLLFPITA). Residues 20–50 (LLMDGDQPADRPAERMDYDISSEVHRLLERR) constitute a propeptide that is removed on maturation. P52, P53, and P64 each carry 4-hydroxyproline. 3 cysteine pairs are disulfide-bonded: C54–C66, C55–C71, and C60–C72. The residue at position 74 (G74) is a Glycine amide.

In terms of tissue distribution, expressed by the venom duct.

It is found in the secreted. In terms of biological role, psi-conotoxins act on postsynaptic membranes, and act as non-competitive antagonist of nicotinic acetylcholine receptors (nAChR). Is more toxic than Psi-conotoxin PIIIF. In vivo, has paralytic activity when injected intraperitoneally into goldfish. The chain is Psi-conotoxin PIIIE from Conus purpurascens (Purple cone).